Consider the following 155-residue polypeptide: Nuclear cap-binding protein subunit 2 (155 aa).

MRNA contacts are provided by residues tyrosine 19, tyrosine 42, 111-115 (RTDWD), 122-126 (RQYGR), and 132-133 (QV). The region spanning 39 to 117 (NTLYVGNLSF…RIIRTDWDAG (79 aa)) is the RRM domain. The disordered stretch occupies residues 122–155 (RQYGRGKSGGQVRDEYRQDYDPARGGYGKVVARP). Basic and acidic residues predominate over residues 133-143 (VRDEYRQDYDP).

Belongs to the RRM NCBP2 family. Component of the nuclear cap-binding complex (CBC), a heterodimer composed of ncbp1/cbp80 and ncbp2/cbp20 that interacts with m7GpppG-capped RNA.

The protein localises to the nucleus. The protein resides in the cytoplasm. Its function is as follows. Component of the cap-binding complex (CBC), which binds co-transcriptionally to the 5' cap of pre-mRNAs and is involved in various processes such as pre-mRNA splicing, translation regulation, nonsense-mediated mRNA decay, RNA-mediated gene silencing (RNAi) by microRNAs (miRNAs) and mRNA export. The CBC complex is involved in mRNA export from the nucleus, leading to the recruitment of the mRNA export machinery to the 5' end of mRNA and to mRNA export in a 5' to 3' direction through the nuclear pore. The CBC complex is also involved in mediating U snRNA and intronless mRNAs export from the nucleus. The CBC complex is essential for a pioneer round of mRNA translation, before steady state translation when the CBC complex is replaced by cytoplasmic cap-binding protein eIF4E. The pioneer round of mRNA translation mediated by the CBC complex plays a central role in nonsense-mediated mRNA decay (NMD), NMD only taking place in mRNAs bound to the CBC complex, but not on eIF4E-bound mRNAs. The CBC complex enhances NMD in mRNAs containing at least one exon-junction complex (EJC), promoting the interaction between upf1 and upf2. The CBC complex is also involved in 'failsafe' NMD, which is independent of the EJC complex, while it does not participate in Staufen-mediated mRNA decay (SMD). During cell proliferation, the CBC complex is also involved in microRNAs (miRNAs) biogenesis via its interaction with srrt/ars2, thereby being required for miRNA-mediated RNA interference. The CBC complex also acts as a negative regulator of parn, thereby acting as an inhibitor of mRNA deadenylation. In the CBC complex, ncbp2/cbp20 recognizes and binds capped RNAs (m7GpppG-capped RNA) but requires ncbp1/cbp80 to stabilize the movement of its N-terminal loop and lock the CBC into a high affinity cap-binding state with the cap structure. The conventional cap-binding complex with NCBP2 binds both small nuclear RNA (snRNA) and messenger (mRNA) and is involved in their export from the nucleus. This chain is Nuclear cap-binding protein subunit 2 (ncbp2), found in Esox lucius (Northern pike).